A 20-amino-acid chain; its full sequence is Serum amyloid P-component (20 aa).

The Pentraxin (PTX) domain occupies 1–20 (ZPIDLMGKVFVFDKELSPBI).

Belongs to the pentraxin family. In terms of assembly, homopentamer. Pentraxin (or pentaxin) have a discoid arrangement of 5 non-covalently bound subunits.

Its subcellular location is the secreted. The chain is Serum amyloid P-component from Pleuronectes platessa (European plaice).